The following is a 379-amino-acid chain: Putative nucleosome assembly protein C2D10.11C (379 aa).

The segment covering methionine 1–lysine 10 has biased composition (basic and acidic residues). Disordered regions lie at residues methionine 1–leucine 30 and serine 345–aspartate 379. The span at alanine 16–valine 28 shows a compositional bias: polar residues.

The protein belongs to the nucleosome assembly protein (NAP) family.

Its subcellular location is the nucleus. In Schizosaccharomyces pombe (strain 972 / ATCC 24843) (Fission yeast), this protein is Putative nucleosome assembly protein C2D10.11C.